The primary structure comprises 717 residues: RNA helicase NPH-II (717 aa).

Residues Phe-193–Tyr-384 form the Helicase ATP-binding domain. Gly-206–Thr-213 contacts ATP. The short motif at Asp-331–His-334 is the DEXH box element. In terms of domain architecture, Helicase C-terminal spans Ile-406–Tyr-566.

It belongs to the DEAD box helicase family. DEAH subfamily. As to quaternary structure, monomer.

The protein resides in the virion. It carries out the reaction ATP + H2O = ADP + phosphate + H(+). In terms of biological role, NTP-dependent helicase that catalyzes unidirectional unwinding of 3'tailed duplex RNAs and plays an important role during transcription of early mRNAs, presumably by preventing R-loop formation behind the elongating RNA polymerase. Might also play a role in the export of newly synthesized mRNA chains out of the core into the cytoplasm. Required for replication and propagation of viral particles. In Melanoplus sanguinipes (Migratory grasshopper), this protein is RNA helicase NPH-II (NPH2).